Consider the following 117-residue polypeptide: MQKSCDENEGTPQNTPKADEGHPSEDPPQQAGENLQASGENVREETDGSLRGEPAEPSPEPKEDTPARHLNPEEVIRGVDELERLREEIRRVRNKFVLMHWKQRHSRSRPYPVCFRP.

Residues 1 to 81 (MQKSCDENEG…PEEVIRGVDE (81 aa)) are disordered. A compositionally biased stretch (basic and acidic residues) spans 41 to 81 (NVREETDGSLRGEPAEPSPEPKEDTPARHLNPEEVIRGVDE). A coiled-coil region spans residues 73 to 100 (EEVIRGVDELERLREEIRRVRNKFVLMH).

The protein belongs to the TFS-II family. TFA subfamily. In terms of tissue distribution, highly expressed in kidney. Moderately expressed in heart and lung. Low expression in brain and liver. Expression is up-regulated in nephrectomized kidney.

It is found in the nucleus. Its function is as follows. May be involved in transcriptional regulation. The polypeptide is Transcription elongation factor A protein-like 8 (Tceal8) (Rattus norvegicus (Rat)).